Here is a 223-residue protein sequence, read N- to C-terminus: Deoxyribose-phosphate aldolase (223 aa).

D89 functions as the Proton donor/acceptor in the catalytic mechanism. K152 functions as the Schiff-base intermediate with acetaldehyde in the catalytic mechanism. Catalysis depends on K181, which acts as the Proton donor/acceptor.

Belongs to the DeoC/FbaB aldolase family. DeoC type 1 subfamily.

The protein resides in the cytoplasm. The enzyme catalyses 2-deoxy-D-ribose 5-phosphate = D-glyceraldehyde 3-phosphate + acetaldehyde. It functions in the pathway carbohydrate degradation; 2-deoxy-D-ribose 1-phosphate degradation; D-glyceraldehyde 3-phosphate and acetaldehyde from 2-deoxy-alpha-D-ribose 1-phosphate: step 2/2. Functionally, catalyzes a reversible aldol reaction between acetaldehyde and D-glyceraldehyde 3-phosphate to generate 2-deoxy-D-ribose 5-phosphate. This is Deoxyribose-phosphate aldolase from Listeria monocytogenes serotype 4b (strain F2365).